We begin with the raw amino-acid sequence, 855 residues long: Leucine--tRNA ligase (855 aa).

The 'HIGH' region signature appears at P45–H55. The short motif at K619–S623 is the 'KMSKS' region element. K622 serves as a coordination point for ATP.

Belongs to the class-I aminoacyl-tRNA synthetase family.

The protein resides in the cytoplasm. The catalysed reaction is tRNA(Leu) + L-leucine + ATP = L-leucyl-tRNA(Leu) + AMP + diphosphate. In Hyphomonas neptunium (strain ATCC 15444), this protein is Leucine--tRNA ligase.